Consider the following 63-residue polypeptide: Putative flagellar calcium-binding protein (63 aa).

Positions 1–11 (MGCISSKSTQT) are enriched in polar residues. Residues 1 to 23 (MGCISSKSTQTGKKEGKTAAERK) are disordered. Positions 12-23 (GKKEGKTAAERK) are enriched in basic and acidic residues. One can recognise an EF-hand domain in the interval 40 to 63 (EDKARRIELFKKFDKNNTGKLSME). Ca(2+)-binding residues include aspartate 53, asparagine 55, threonine 57, and lysine 59.

This sequence belongs to the calflagin family.

It localises to the cell projection. Its subcellular location is the cilium. It is found in the flagellum. This is Putative flagellar calcium-binding protein (CABP) from Crithidia fasciculata.